A 1205-amino-acid chain; its full sequence is PAN2-PAN3 deadenylation complex catalytic subunit Pan2 (1205 aa).

WD repeat units lie at residues 153 to 193 (DESE…QKYA), 195 to 231 (ETPGVTIMRQTNRFFFCGHTSGKVSLRDLRSFKVEHE), 244 to 280 (VHGNLLAACGFSSRLTGLACDRFLKVYDLRMMRAITP), and 328 to 367 (PVGPLLMTFDVSASKQALAFGDSEGCVHLWTDSPEPSFNP). The tract at residues 368–484 (YSRETEFALP…PTGREEEPLH (117 aa)) is linker. The 440-residue stretch at 485–924 (TVSKKYRKVT…VPAILYYVKR (440 aa)) folds into the USP domain. A Phosphoserine modification is found at Ser-784. The Exonuclease domain occupies 975–1147 (VGLDAEFVTL…EDARTALQLY (173 aa)). Residues Asp-978, Glu-980, Asp-1087, and Asp-1139 each contribute to the a divalent metal cation site. The tract at residues 1179–1205 (WKVPEPESQSSPKSKAGLRPGALGWVG) is disordered. A compositionally biased stretch (low complexity) spans 1184-1193 (PESQSSPKSK). Residue Ser-1189 is modified to Phosphoserine.

This sequence belongs to the peptidase C19 family. PAN2 subfamily. Forms a heterotrimer with an asymmetric homodimer of the regulatory subunit PAN3 to form the poly(A)-nuclease (PAN) deadenylation complex. Interacts with PAN3 isoform 1/Pan3L and isoform 3/Pan3S. Interacts with ZFP36. Requires a divalent metal cation as cofactor.

The protein resides in the cytoplasm. The protein localises to the P-body. Its subcellular location is the nucleus. The enzyme catalyses Exonucleolytic cleavage of poly(A) to 5'-AMP.. Positively regulated by the regulatory subunit PAN3. Its function is as follows. Catalytic subunit of the poly(A)-nuclease (PAN) deadenylation complex, one of two cytoplasmic mRNA deadenylases involved in general and miRNA-mediated mRNA turnover. PAN specifically shortens poly(A) tails of RNA and the activity is stimulated by poly(A)-binding protein (PABP). PAN deadenylation is followed by rapid degradation of the shortened mRNA tails by the CCR4-NOT complex. Deadenylated mRNAs are then degraded by two alternative mechanisms, namely exosome-mediated 3'-5' exonucleolytic degradation, or deadenylation-dependent mRNA decaping and subsequent 5'-3' exonucleolytic degradation by XRN1. Also acts as an important regulator of the HIF1A-mediated hypoxic response. Required for HIF1A mRNA stability independent of poly(A) tail length regulation. The sequence is that of PAN2-PAN3 deadenylation complex catalytic subunit Pan2 from Rattus norvegicus (Rat).